The following is a 263-amino-acid chain: Proteasome subunit beta type-5 (263 aa).

Residues 1 to 59 (MALASVLERPLSVNRRGFFGLGGRADLLDLGPGSPSDGLSLAAPSWGVPEEPRIEILHG) constitute a propeptide, removed in mature form. The Nucleophile role is filled by Thr60. Ala108 is a bortezomib binding site.

It belongs to the peptidase T1B family. The 26S proteasome consists of a 20S proteasome core and two 19S regulatory subunits. The 20S proteasome core is a barrel-shaped complex made of 28 subunits that are arranged in four stacked rings. The two outer rings are each formed by seven alpha subunits, and the two inner rings are formed by seven beta subunits. The proteolytic activity is exerted by three beta-subunits PSMB5, PSMB6 and PSMB7. Directly interacts with POMP. Interacts with ABCB1 and TAP1.

The protein resides in the cytoplasm. It is found in the nucleus. It carries out the reaction Cleavage of peptide bonds with very broad specificity.. In terms of biological role, component of the 20S core proteasome complex involved in the proteolytic degradation of most intracellular proteins. This complex plays numerous essential roles within the cell by associating with different regulatory particles. Associated with two 19S regulatory particles, forms the 26S proteasome and thus participates in the ATP-dependent degradation of ubiquitinated proteins. The 26S proteasome plays a key role in the maintenance of protein homeostasis by removing misfolded or damaged proteins that could impair cellular functions, and by removing proteins whose functions are no longer required. Associated with the PA200 or PA28, the 20S proteasome mediates ubiquitin-independent protein degradation. This type of proteolysis is required in several pathways including spermatogenesis (20S-PA200 complex) or generation of a subset of MHC class I-presented antigenic peptides (20S-PA28 complex). Within the 20S core complex, PSMB5 displays a chymotrypsin-like activity. This Bos taurus (Bovine) protein is Proteasome subunit beta type-5.